The following is a 388-amino-acid chain: Galactokinase (388 aa).

33 to 36 contributes to the substrate binding site; sequence EHTD. Residues Ser-67 and 124 to 130 contribute to the ATP site; that span reads GAGLSSS. Residues Ser-130 and Glu-162 each coordinate Mg(2+). Asp-174 serves as the catalytic Proton acceptor. Substrate is bound at residue Tyr-224.

It belongs to the GHMP kinase family. GalK subfamily.

Its subcellular location is the cytoplasm. The catalysed reaction is alpha-D-galactose + ATP = alpha-D-galactose 1-phosphate + ADP + H(+). The protein operates within carbohydrate metabolism; galactose metabolism. Its function is as follows. Catalyzes the transfer of the gamma-phosphate of ATP to D-galactose to form alpha-D-galactose-1-phosphate (Gal-1-P). The sequence is that of Galactokinase from Lacticaseibacillus paracasei (strain ATCC 334 / BCRC 17002 / CCUG 31169 / CIP 107868 / KCTC 3260 / NRRL B-441) (Lactobacillus paracasei).